We begin with the raw amino-acid sequence, 136 residues long: Glycine-rich RNA-binding protein 4, mitochondrial (136 aa).

Residues 1-33 (MAFCNKLSGILRQGVSQSSNGPVTSMLGSLRYM) constitute a mitochondrion transit peptide. The 79-residue stretch at 35–113 (SKLFVGGLSW…RQIRVNLATE (79 aa)) folds into the RRM domain. Position 43 is a phosphoserine (Ser43). Residues 113–136 (ERSSAPRSSFGGGGGYGGGGGGGY) form a disordered region. Residues 122 to 136 (FGGGGGYGGGGGGGY) are compositionally biased toward gly residues. A glycine-rich (GR) required for cell-to-cell movement region spans residues 123 to 135 (GGGGGYGGGGGGG).

Belongs to the GR-RBP family. Binds to small phloem-mobile single-stranded RNAs (ss-sRNA, e.g. small interfering RNA (siRNA) and microRNA (miRNA)) in the phloeme exudate, including viral-derived sRNA (vsiRNA). Abundantly expressed in young plants, root tips, and flowers, but weakly in mature leaves and stems, implying highly expression in actively proliferating organs.

It is found in the mitochondrion. The protein localises to the secreted. Its function is as follows. Possibly has a role in RNA transcription or processing during stress. Binds sequence non-specifically to RNAs and DNAs. Mediates cell-to-cell trafficking of RNA interference (RNAi) signals (small RNAs (sRNA), e.g. small interfering RNA (siRNA) and microRNA (miRNA)) which regulate growth and development, as well as responses to environmental inputs, including pathogen attack; can compromise zucchini yellow mosaic virus (ZYMV) and tobacco rattle virus (TRV) infections at the early stage. The sequence is that of Glycine-rich RNA-binding protein 4, mitochondrial from Arabidopsis thaliana (Mouse-ear cress).